Reading from the N-terminus, the 239-residue chain is Small ribosomal subunit protein uS3 (239 aa).

The KH type-2 domain maps to 40–108 (RGLLEKELYS…VALNVQEVQN (69 aa)). The tract at residues 212–239 (KPKARPELPKAEERPRRRRPAVRVKKEE) is disordered. Residues 215–226 (ARPELPKAEERP) are compositionally biased toward basic and acidic residues. Residues 227–239 (RRRRPAVRVKKEE) show a composition bias toward basic residues.

This sequence belongs to the universal ribosomal protein uS3 family. In terms of assembly, part of the 30S ribosomal subunit. Forms a tight complex with proteins S10 and S14.

Functionally, binds the lower part of the 30S subunit head. Binds mRNA in the 70S ribosome, positioning it for translation. The sequence is that of Small ribosomal subunit protein uS3 (rpsC) from Thermus thermophilus (strain ATCC BAA-163 / DSM 7039 / HB27).